The following is a 633-amino-acid chain: tRNA uridine 5-carboxymethylaminomethyl modification enzyme MnmG (633 aa).

FAD contacts are provided by residues 15-20 (GAGHAG), Val127, and Ser182. Residue 276 to 290 (GPRYCPSIEDKIVRF) coordinates NAD(+). Position 373 (Gln373) interacts with FAD.

Belongs to the MnmG family. As to quaternary structure, homodimer. Heterotetramer of two MnmE and two MnmG subunits. FAD is required as a cofactor.

The protein resides in the cytoplasm. Functionally, NAD-binding protein involved in the addition of a carboxymethylaminomethyl (cmnm) group at the wobble position (U34) of certain tRNAs, forming tRNA-cmnm(5)s(2)U34. In Streptococcus thermophilus (strain ATCC BAA-491 / LMD-9), this protein is tRNA uridine 5-carboxymethylaminomethyl modification enzyme MnmG.